The chain runs to 373 residues: Erythronate-4-phosphate dehydrogenase (373 aa).

Substrate-binding residues include Ser45 and Thr66. 2 residues coordinate NAD(+): Asp146 and Thr175. Arg208 is an active-site residue. Asp232 contacts NAD(+). Glu237 is an active-site residue. Catalysis depends on His254, which acts as the Proton donor. Position 257 (Gly257) interacts with NAD(+). Position 258 (Tyr258) interacts with substrate.

It belongs to the D-isomer specific 2-hydroxyacid dehydrogenase family. PdxB subfamily. Homodimer.

The protein resides in the cytoplasm. The catalysed reaction is 4-phospho-D-erythronate + NAD(+) = (R)-3-hydroxy-2-oxo-4-phosphooxybutanoate + NADH + H(+). It participates in cofactor biosynthesis; pyridoxine 5'-phosphate biosynthesis; pyridoxine 5'-phosphate from D-erythrose 4-phosphate: step 2/5. In terms of biological role, catalyzes the oxidation of erythronate-4-phosphate to 3-hydroxy-2-oxo-4-phosphonooxybutanoate. In Serratia proteamaculans (strain 568), this protein is Erythronate-4-phosphate dehydrogenase.